Here is a 619-residue protein sequence, read N- to C-terminus: Chaperone protein HscA homolog (619 aa).

It belongs to the heat shock protein 70 family.

Chaperone involved in the maturation of iron-sulfur cluster-containing proteins. Has a low intrinsic ATPase activity which is markedly stimulated by HscB. In Pseudomonas aeruginosa (strain LESB58), this protein is Chaperone protein HscA homolog.